We begin with the raw amino-acid sequence, 481 residues long: Cobyric acid synthase (481 aa).

In terms of domain architecture, GATase cobBQ-type spans A248–F435. Catalysis depends on C330, which acts as the Nucleophile. H427 is a catalytic residue.

It belongs to the CobB/CobQ family. CobQ subfamily.

The protein operates within cofactor biosynthesis; adenosylcobalamin biosynthesis. In terms of biological role, catalyzes amidations at positions B, D, E, and G on adenosylcobyrinic A,C-diamide. NH(2) groups are provided by glutamine, and one molecule of ATP is hydrogenolyzed for each amidation. This is Cobyric acid synthase from Cereibacter sphaeroides (strain ATCC 17025 / ATH 2.4.3) (Rhodobacter sphaeroides).